We begin with the raw amino-acid sequence, 306 residues long: Homoserine O-acetyltransferase (306 aa).

The active-site Acyl-thioester intermediate is the Cys142. Residues Lys163 and Ser192 each coordinate substrate. His235 serves as the catalytic Proton acceptor. Residue Glu237 is part of the active site. Arg249 lines the substrate pocket.

Belongs to the MetA family.

The protein resides in the cytoplasm. The enzyme catalyses L-homoserine + acetyl-CoA = O-acetyl-L-homoserine + CoA. The protein operates within amino-acid biosynthesis; L-methionine biosynthesis via de novo pathway; O-acetyl-L-homoserine from L-homoserine: step 1/1. Transfers an acetyl group from acetyl-CoA to L-homoserine, forming acetyl-L-homoserine. This is Homoserine O-acetyltransferase from Brucella abortus (strain S19).